The sequence spans 409 residues: Elongation factor Tu, chloroplastic (409 aa).

Residues 10–214 enclose the tr-type G domain; it reads KPHVNIGTIG…AVDEYIPTPE (205 aa). The tract at residues 19–26 is G1; it reads GHVDHGKT. Residue 19-26 participates in GTP binding; sequence GHVDHGKT. Residue T26 coordinates Mg(2+). The tract at residues 60–64 is G2; sequence GITIN. The segment at 81–84 is G3; that stretch reads DCPG. Residues 81-85 and 136-139 contribute to the GTP site; these read DCPGH and NKED. The segment at 136–139 is G4; the sequence is NKED. The G5 stretch occupies residues 174 to 176; it reads SAL.

It belongs to the TRAFAC class translation factor GTPase superfamily. Classic translation factor GTPase family. EF-Tu/EF-1A subfamily.

It is found in the plastid. It localises to the chloroplast. It carries out the reaction GTP + H2O = GDP + phosphate + H(+). Functionally, GTP hydrolase that promotes the GTP-dependent binding of aminoacyl-tRNA to the A-site of ribosomes during protein biosynthesis. This chain is Elongation factor Tu, chloroplastic (tufA), found in Trieres chinensis (Marine centric diatom).